The chain runs to 431 residues: Lipoyl synthase 2, mitochondrial (431 aa).

Residues 21-43 (SPLGKLQEERGEGVAKDPKKDKQ) are disordered. Over residues 26–40 (LQEERGEGVAKDPKK) the composition is skewed to basic and acidic residues. Positions 127, 132, 138, 159, 163, 166, and 375 each coordinate [4Fe-4S] cluster. Residues 142–364 (DEEEGTATAT…EEEAMAMGFL (223 aa)) enclose the Radical SAM core domain.

This sequence belongs to the radical SAM superfamily. Lipoyl synthase family. [4Fe-4S] cluster serves as cofactor.

Its subcellular location is the mitochondrion. It catalyses the reaction [[Fe-S] cluster scaffold protein carrying a second [4Fe-4S](2+) cluster] + N(6)-octanoyl-L-lysyl-[protein] + 2 oxidized [2Fe-2S]-[ferredoxin] + 2 S-adenosyl-L-methionine + 4 H(+) = [[Fe-S] cluster scaffold protein] + N(6)-[(R)-dihydrolipoyl]-L-lysyl-[protein] + 4 Fe(3+) + 2 hydrogen sulfide + 2 5'-deoxyadenosine + 2 L-methionine + 2 reduced [2Fe-2S]-[ferredoxin]. The protein operates within protein modification; protein lipoylation via endogenous pathway; protein N(6)-(lipoyl)lysine from octanoyl-[acyl-carrier-protein]: step 2/2. In terms of biological role, catalyzes the radical-mediated insertion of two sulfur atoms into the C-6 and C-8 positions of the octanoyl moiety bound to the lipoyl domains of lipoate-dependent enzymes, thereby converting the octanoylated domains into lipoylated derivatives. This Trypanosoma cruzi (strain CL Brener) protein is Lipoyl synthase 2, mitochondrial.